The chain runs to 146 residues: uncharacterized protein (146 aa).

This sequence belongs to the BlaI transcriptional regulatory family.

This is an uncharacterized protein from Latilactobacillus sakei (Lactobacillus sakei).